Reading from the N-terminus, the 212-residue chain is Uridine kinase (212 aa).

Gly-13–Thr-20 contacts ATP.

Belongs to the uridine kinase family.

It is found in the cytoplasm. The catalysed reaction is uridine + ATP = UMP + ADP + H(+). The enzyme catalyses cytidine + ATP = CMP + ADP + H(+). It participates in pyrimidine metabolism; CTP biosynthesis via salvage pathway; CTP from cytidine: step 1/3. The protein operates within pyrimidine metabolism; UMP biosynthesis via salvage pathway; UMP from uridine: step 1/1. The polypeptide is Uridine kinase (Bacillus cereus (strain B4264)).